The sequence spans 631 residues: MSTTTLTRREQRAKAQHFIDTLEGTAFPNSKRIYVTGSQHDIRVPMREIQLSPTLIGGSKDNPQFEENEAVPVYDTSGPYGDPEVAINVQQGLAKLRQPWIDARNDSEELDDRSSAYTRERLADDGLDDLRFTGLLTPKRAKAGKCVTQLHYARKGIITPEMEFIAIRENMGRERIRSEVLRHQHPGMNFGARLPENITPEFVRDEVAAGRAIIPANINHPESEPMIIGRNFLVKVNANIGNSAVTSSIEEEVEKLVWSTRWGADTVMDLSTGRYIHETREWILRNSPVPIGTVPIYQALEKVNGIAEDLTWEAFRDTLLEQAEQGVDYFTIHAGVLLRYVPMTAKRLTGIVSRGGSIMAKWCLSHHKENFLFEHFREICEICAAYDISLSLGDGLRPGSIQDANDEAQFSELHTLGELTKIAWEYDVQVMIEGPGHVPMHMIQRNMTEELESCHEAPFYTLGPLTTDIAPGYDHFTSGIGAAMIGWFGCAMLCYVTPKEHLGLPNKEDVKQGLITYKIAAHAADLAKGHPGAQIRDNAMSKARFEFRWEDQFNLALDPFTARAYHDETLPQESGKVAHFCSMCGPKFCSMKISQEVRDYAAAQAIEVGMADMSENFRAKGGEIYLKREEV.

Residues Asn-239, Met-268, Tyr-297, His-333, 353–355, 394–397, and Glu-433 contribute to the substrate site; these read SRG and DGLR. His-437 is a Zn(2+) binding site. A substrate-binding site is contributed by Tyr-460. A Zn(2+)-binding site is contributed by His-501. Residues Cys-581, Cys-584, and Cys-589 each coordinate [4Fe-4S] cluster.

This sequence belongs to the ThiC family. As to quaternary structure, homodimer. The cofactor is [4Fe-4S] cluster.

The catalysed reaction is 5-amino-1-(5-phospho-beta-D-ribosyl)imidazole + S-adenosyl-L-methionine = 4-amino-2-methyl-5-(phosphooxymethyl)pyrimidine + CO + 5'-deoxyadenosine + formate + L-methionine + 3 H(+). It participates in cofactor biosynthesis; thiamine diphosphate biosynthesis. Its function is as follows. Catalyzes the synthesis of the hydroxymethylpyrimidine phosphate (HMP-P) moiety of thiamine from aminoimidazole ribotide (AIR) in a radical S-adenosyl-L-methionine (SAM)-dependent reaction. The chain is Phosphomethylpyrimidine synthase from Salmonella paratyphi C (strain RKS4594).